A 102-amino-acid chain; its full sequence is ATP-dependent Clp protease adapter protein ClpS (102 aa).

The protein belongs to the ClpS family. Binds to the N-terminal domain of the chaperone ClpA.

Functionally, involved in the modulation of the specificity of the ClpAP-mediated ATP-dependent protein degradation. The sequence is that of ATP-dependent Clp protease adapter protein ClpS from Desulfotalea psychrophila (strain LSv54 / DSM 12343).